The primary structure comprises 147 residues: Deoxyuridine 5'-triphosphate nucleotidohydrolase (147 aa).

Substrate-binding positions include 68–70, asparagine 81, and 85–87; these read RSG and TID.

Belongs to the dUTPase family. It depends on Mg(2+) as a cofactor.

The catalysed reaction is dUTP + H2O = dUMP + diphosphate + H(+). The protein operates within pyrimidine metabolism; dUMP biosynthesis; dUMP from dCTP (dUTP route): step 2/2. This enzyme is involved in nucleotide metabolism: it produces dUMP, the immediate precursor of thymidine nucleotides and it decreases the intracellular concentration of dUTP so that uracil cannot be incorporated into DNA. This is Deoxyuridine 5'-triphosphate nucleotidohydrolase from Solibacter usitatus (strain Ellin6076).